The primary structure comprises 203 residues: V-type ATP synthase subunit D (203 aa).

The protein belongs to the V-ATPase D subunit family.

Its function is as follows. Produces ATP from ADP in the presence of a proton gradient across the membrane. The polypeptide is V-type ATP synthase subunit D (Thermotoga neapolitana (strain ATCC 49049 / DSM 4359 / NBRC 107923 / NS-E)).